The chain runs to 248 residues: MSCLLAIDAGNTRTKWAVLQYETGEILQRGVLNDDMPAEWALCERVAVANVAGPNRQALLEARLKLLGLPVRWHASTLHACGVSNGYAIPAQLGVDRWAAMIAAWQHYQRSCLVVNAGTALTVDMIESTAPGQACFLGGIIMPGIRLMQESLASAAANIGAMHGVFRDFPLSTQDAVCSGSLHAGAGAINNLLTLLGERCGEAIPCILSGGDAVALLPLLQKHILHSEFCLEENLVLQGLWYMERGLP.

8 to 15 is an ATP binding site; it reads DAGNTRTK. Substrate-binding positions include Tyr87 and 94–97; that span reads GVDR. Residue Asp96 is the Proton acceptor of the active site. ATP is bound at residue Thr119. Thr173 contacts substrate.

Belongs to the type III pantothenate kinase family. In terms of assembly, homodimer. NH4(+) is required as a cofactor. K(+) serves as cofactor.

Its subcellular location is the cytoplasm. It carries out the reaction (R)-pantothenate + ATP = (R)-4'-phosphopantothenate + ADP + H(+). It participates in cofactor biosynthesis; coenzyme A biosynthesis; CoA from (R)-pantothenate: step 1/5. Catalyzes the phosphorylation of pantothenate (Pan), the first step in CoA biosynthesis. The sequence is that of Type III pantothenate kinase from Methylobacillus flagellatus (strain ATCC 51484 / DSM 6875 / VKM B-1610 / KT).